The chain runs to 538 residues: Methyl-accepting chemotaxis protein NahY (538 aa).

Topologically, residues 1-9 (MQQFTIRTR) are cytoplasmic. The helical transmembrane segment at 10 to 30 (LLMLVGAMFIGFITIELMGFS) threads the bilayer. The Periplasmic portion of the chain corresponds to 31–187 (ALQRGVASLN…AVVLYDSSRT (157 aa)). A helical membrane pass occupies residues 188–208 (MLALLLLGILICGGVFATRLI). In terms of domain architecture, HAMP spans 209–261 (RSIIHPLTTLKDAAARVALGDLSQSIQVSGRNEVTDVQQSVQAMQANLRNTLQ). Residues 209–538 (RSIIHPLTTL…LNNLVNRFSM (330 aa)) lie on the Cytoplasmic side of the membrane. The Methyl-accepting transducer domain maps to 266-502 (SAAQLAAAAE…EVDRNLVAIS (237 aa)).

This sequence belongs to the methyl-accepting chemotaxis (MCP) protein family.

It is found in the cell inner membrane. Chemotactic-signal transducers respond to changes in the concentration of attractants and repellents in the environment, transduce a signal from the outside to the inside of the cell, and facilitate sensory adaptation through the variation of the level of methylation. Chemoreceptor for naphthalene or a related compound. May facilitate biodegradation. In Pseudomonas putida (Arthrobacter siderocapsulatus), this protein is Methyl-accepting chemotaxis protein NahY (nahY).